The primary structure comprises 426 residues: Serine hydroxymethyltransferase (426 aa).

(6S)-5,6,7,8-tetrahydrofolate-binding positions include leucine 118 and glycine 122 to leucine 124. Lysine 227 bears the N6-(pyridoxal phosphate)lysine mark.

It belongs to the SHMT family. As to quaternary structure, homodimer. Pyridoxal 5'-phosphate serves as cofactor.

The protein resides in the cytoplasm. The catalysed reaction is (6R)-5,10-methylene-5,6,7,8-tetrahydrofolate + glycine + H2O = (6S)-5,6,7,8-tetrahydrofolate + L-serine. It functions in the pathway one-carbon metabolism; tetrahydrofolate interconversion. Its pathway is amino-acid biosynthesis; glycine biosynthesis; glycine from L-serine: step 1/1. Its function is as follows. Catalyzes the reversible interconversion of serine and glycine with tetrahydrofolate (THF) serving as the one-carbon carrier. This reaction serves as the major source of one-carbon groups required for the biosynthesis of purines, thymidylate, methionine, and other important biomolecules. Also exhibits THF-independent aldolase activity toward beta-hydroxyamino acids, producing glycine and aldehydes, via a retro-aldol mechanism. The chain is Serine hydroxymethyltransferase from Mycolicibacterium paratuberculosis (strain ATCC BAA-968 / K-10) (Mycobacterium paratuberculosis).